The following is a 464-amino-acid chain: F-box/FBD/LRR-repeat protein At1g80470 (464 aa).

The F-box domain occupies 15 to 62; it reads DWISGLADDLLLQILSKVPTRESVFTSRMSKRWRNLWRHVPALDLDSS. 6 LRR repeats span residues 96 to 122, 123 to 150, 152 to 178, 197 to 222, 223 to 249, and 273 to 298; these read EEHC…TILS, KVNI…TLYS, VFDA…KFDG, IITH…KLES, MRED…SITD, and DAED…TISA. Residues 359–413 enclose the FBD domain; that stretch reads KEEINLSLVPHCFESSLEYVQLKVPITVSETSSKMELAIYFVRNCSVLKKLMLNE.

In Arabidopsis thaliana (Mouse-ear cress), this protein is F-box/FBD/LRR-repeat protein At1g80470.